The primary structure comprises 495 residues: Leucine aminopeptidase 2 (495 aa).

The N-terminal stretch at 1-21 (MKTQLLSLGVALTAISQGVIA) is a signal peptide. The 95-residue stretch at 124–218 (PPADKITAEL…ADGKNLASLV (95 aa)) folds into the PA domain. 2 N-linked (GlcNAc...) asparagine glycosylation sites follow: N142 and N235. Zn(2+)-binding residues include H259 and D271. A glycan (N-linked (GlcNAc...) asparagine) is linked at N272. The active-site Proton acceptor is the E303. Zn(2+) is bound by residues E304 and D332. A glycan (N-linked (GlcNAc...) asparagine) is linked at N352. H430 contacts Zn(2+). Residues 464 to 495 (GFPTRPKTGKRDVSPRGQSMPGGGCGHHSVFM) are disordered.

It belongs to the peptidase M28 family. M28A subfamily. Monomer. Zn(2+) is required as a cofactor.

It is found in the secreted. Functionally, extracellular aminopeptidase that releases a wide variety of amino acids from natural peptides and contributes to pathogenicity. The protein is Leucine aminopeptidase 2 (LAP2) of Arthroderma otae (strain ATCC MYA-4605 / CBS 113480) (Microsporum canis).